A 118-amino-acid polypeptide reads, in one-letter code: Holo-[acyl-carrier-protein] synthase (118 aa).

Asp-8 and Glu-58 together coordinate Mg(2+).

Belongs to the P-Pant transferase superfamily. AcpS family. Mg(2+) serves as cofactor.

The protein localises to the cytoplasm. It carries out the reaction apo-[ACP] + CoA = holo-[ACP] + adenosine 3',5'-bisphosphate + H(+). Functionally, transfers the 4'-phosphopantetheine moiety from coenzyme A to a Ser of acyl-carrier-protein. The chain is Holo-[acyl-carrier-protein] synthase from Streptococcus pyogenes serotype M1.